Reading from the N-terminus, the 315-residue chain is Adenine deaminase (315 aa).

Positions 14, 16, and 194 each coordinate Zn(2+). The active-site Proton donor is the Glu-197. Asp-275 is a Zn(2+) binding site. Asp-276 lines the substrate pocket.

This sequence belongs to the metallo-dependent hydrolases superfamily. Adenosine and AMP deaminases family. Adenine deaminase type 2 subfamily. The cofactor is Zn(2+).

It carries out the reaction adenine + H2O + H(+) = hypoxanthine + NH4(+). In terms of biological role, catalyzes the hydrolytic deamination of adenine to hypoxanthine. Plays an important role in the purine salvage pathway and in nitrogen catabolism. The protein is Adenine deaminase of Ectopseudomonas mendocina (strain ymp) (Pseudomonas mendocina).